We begin with the raw amino-acid sequence, 128 residues long: MTSLFAQEIRLSKRHEEIVSQRLMLLQQMENKLGDQHTEKASQLQTVETAFKRNLSLLKDIEAAEKSLQTRIHPLPRPEVVSLETRYWASVEEYIPKWEQFLLGRAPYPFAVENQNEAENTIQNEAQR.

The protein localises to the cell projection. The protein resides in the cilium. Functionally, may play a role in ciliary assembly. The sequence is that of Centrosomal protein 15 from Homo sapiens (Human).